Consider the following 20-residue polypeptide: Alpha-basrubrin (20 aa).

Positions 1 to 13 are enriched in basic and acidic residues; it reads GADFQECMKEHSQ. A disordered region spans residues 1–20; it reads GADFQECMKEHSQKQHQHQG.

Functionally, possesses antifungal activity against B.cinerea, M.arachidicola and F.oxysporum but not C.comatus and R.solani. Inhibits HIV-1 reverse transcriptase and cell-free translation. The chain is Alpha-basrubrin from Basella alba (Malabar spinach).